The primary structure comprises 122 residues: MARISGIDLPREKRVEIGLTYIYGIGLSTSQKILAVTGINPDTRVKDLSEEEVNEIRTYINKNLMVEGDLRRDVALNIKRLVEIGSYRGIRHRRGLPVRGQKTKTNARTRKGPKKTIANKKK.

The interval 93–122 (RRGLPVRGQKTKTNARTRKGPKKTIANKKK) is disordered.

The protein belongs to the universal ribosomal protein uS13 family. As to quaternary structure, part of the 30S ribosomal subunit. Forms a loose heterodimer with protein S19. Forms two bridges to the 50S subunit in the 70S ribosome.

Located at the top of the head of the 30S subunit, it contacts several helices of the 16S rRNA. In the 70S ribosome it contacts the 23S rRNA (bridge B1a) and protein L5 of the 50S subunit (bridge B1b), connecting the 2 subunits; these bridges are implicated in subunit movement. Contacts the tRNAs in the A and P-sites. In Clostridium beijerinckii (strain ATCC 51743 / NCIMB 8052) (Clostridium acetobutylicum), this protein is Small ribosomal subunit protein uS13.